A 288-amino-acid polypeptide reads, in one-letter code: Nucleotide-binding protein Pcar_1935 (288 aa).

Residue 11-18 participates in ATP binding; sequence GLSGSGKT. 62–65 is a binding site for GTP; sequence DVRN.

The protein belongs to the RapZ-like family.

Its function is as follows. Displays ATPase and GTPase activities. The chain is Nucleotide-binding protein Pcar_1935 from Syntrophotalea carbinolica (strain DSM 2380 / NBRC 103641 / GraBd1) (Pelobacter carbinolicus).